Here is a 68-residue protein sequence, read N- to C-terminus: Protein SrnB (68 aa).

A helical transmembrane segment spans residues 23-42 (YALIGLLAVCATVLCFSLIF).

It belongs to the Hok/Gef family.

The protein localises to the cell inner membrane. Toxic component of a type I toxin-antitoxin (TA) system. Its normal function is believed to be effective plasmid stabilization through postsegregational killing of cells that have lost the F plasmid. Promotes degradation of stable RNA in E.coli. The protein is Protein SrnB (srnB) of Escherichia coli (strain K12).